The primary structure comprises 218 residues: MIYTKNAYGSISYTYQDFIDLRYKGLHMEQKRILTLYSAIDFSGNRLEGQIPESIGLLKALIALNLSNNAFIGNIPMSMANLIELESLDMSRNGLSGTIPQGLKTLSFLGYINVSHNQLKGEIPQGTQITGPPKSSFEGNAGLCGLPLEESCFGTKVPPIQQSKKEDNQEDAKVLNWKAVATGYGPGVFFGLAIAQIIASYKPEWLVKIIGPNKRRNH.

Residues 1–178 (MIYTKNAYGS…QEDAKVLNWK (178 aa)) are Extracellular-facing. 4 LRR repeats span residues 34 to 58 (LTLY…IGLL), 59 to 82 (KALI…MANL), 83 to 106 (IELE…LKTL), and 108 to 131 (FLGY…QITG). N65 carries N-linked (GlcNAc...) asparagine glycosylation. N113 is a glycosylation site (N-linked (GlcNAc...) asparagine). The chain crosses the membrane as a helical span at residues 179 to 199 (AVATGYGPGVFFGLAIAQIIA). Residues 200–218 (SYKPEWLVKIIGPNKRRNH) lie on the Cytoplasmic side of the membrane.

This sequence belongs to the RLP family.

It localises to the cell membrane. This is Putative receptor like protein 25 from Arabidopsis thaliana (Mouse-ear cress).